The chain runs to 366 residues: GTPase Obg (366 aa).

Residues 1 to 161 (MRFVDEARIQ…FNLRLELKIL (161 aa)) form the Obg domain. The disordered stretch occupies residues 121–148 (SGGRGGKGNEHFKSSTMRAPRFSQPGEP). Positions 162 to 334 (ADAGLIGLPN…LVQELWQVCE (173 aa)) constitute an OBG-type G domain. GTP contacts are provided by residues 168-175 (GLPNAGKS), 193-197 (FTTLT), 217-220 (DIPG), 287-290 (NKID), and 315-317 (SAR). Mg(2+) contacts are provided by S175 and T195.

Belongs to the TRAFAC class OBG-HflX-like GTPase superfamily. OBG GTPase family. Monomer. Requires Mg(2+) as cofactor.

The protein localises to the cytoplasm. Its function is as follows. An essential GTPase which binds GTP, GDP and possibly (p)ppGpp with moderate affinity, with high nucleotide exchange rates and a fairly low GTP hydrolysis rate. Plays a role in control of the cell cycle, stress response, ribosome biogenesis and in those bacteria that undergo differentiation, in morphogenesis control. The protein is GTPase Obg of Desulfovibrio desulfuricans (strain ATCC 27774 / DSM 6949 / MB).